Consider the following 134-residue polypeptide: Profilin (134 aa).

The protein belongs to the profilin family. Occurs in many kinds of cells as a complex with monomeric actin in a 1:1 ratio.

It is found in the cytoplasm. It localises to the cytoskeleton. In terms of biological role, binds to actin and affects the structure of the cytoskeleton. At high concentrations, profilin prevents the polymerization of actin, whereas it enhances it at low concentrations. By binding to PIP2, it inhibits the formation of IP3 and DG. The protein is Profilin of Brassica napus (Rape).